The primary structure comprises 264 residues: Thiazole synthase (264 aa).

Lys-106 (schiff-base intermediate with DXP) is an active-site residue. Residues Gly-167, 193–194 (AG), and 215–216 (NT) each bind 1-deoxy-D-xylulose 5-phosphate.

Belongs to the ThiG family. Homotetramer. Forms heterodimers with either ThiH or ThiS.

The protein resides in the cytoplasm. The catalysed reaction is [ThiS sulfur-carrier protein]-C-terminal-Gly-aminoethanethioate + 2-iminoacetate + 1-deoxy-D-xylulose 5-phosphate = [ThiS sulfur-carrier protein]-C-terminal Gly-Gly + 2-[(2R,5Z)-2-carboxy-4-methylthiazol-5(2H)-ylidene]ethyl phosphate + 2 H2O + H(+). It functions in the pathway cofactor biosynthesis; thiamine diphosphate biosynthesis. Its function is as follows. Catalyzes the rearrangement of 1-deoxy-D-xylulose 5-phosphate (DXP) to produce the thiazole phosphate moiety of thiamine. Sulfur is provided by the thiocarboxylate moiety of the carrier protein ThiS. In vitro, sulfur can be provided by H(2)S. The protein is Thiazole synthase of Xanthomonas oryzae pv. oryzae (strain MAFF 311018).